The sequence spans 737 residues: MPPRRAQAPGAPLLPVLALLPLLLGAGPQSGCLASPVSAAPLPAPGPCASQPCRNGGVCTPRSVTDQEHPAADAEPRYSCTCPAGVSGTYCQFVADPCASNPCHHGNCSSSSSSSSDSYLCICNDGYEGLNCEQPLPSIPTSGWTESTAPRQLQPVPATQEPDIILPRSQATVTLPTWQPKTGQKVVEMKWDQVEVVPDVACGNASSNNSAGGRLVSFEVPQNTSVKIRQDANSLLILLWKVTATGFQQCSLIDGRSVTPLQAPGGLVLLEEMLALGPNHFIGFVNDSVAKSIVALRLTLVVKASNCVPGDSHSNDLECSGKGKCATKPSEATFSCTCQDQYIGTFCEEFDACQRKPCQNEASCIDANEKQDGSNFTCLCLPGYTGELCQSKIDYCVLDPCRNGATCVSSLSGFTCQCLEGYFGSACEEKVDPCMSSPCQNNGTCYVDGVHFTCSCSPGFTGPTCAQLVDFCALSPCAHGMCRSVGTSYKCLCDPGYHGLYCEEEYNECLSAPCLNAATCRDLINGYECVCLAEYKGTHCELYKDPCANISCLNGGTCDSEGLNGTCICAPGFTGEECDIDINECDSNPCHHAGTCLDQPNGYTCHCPHGWVGANCEIHLQWKSGHMAESLTNMPRHSLYIIIGALCVAFILMLIILIVGICRISRIEYQGSSRPAYEEFYNCRSIDSEFSNAIASIRHARFGKKSRPAMYDVTPIAYEDYSPDDKPLVTLIKTKDL.

The N-terminal stretch at 1–25 (MPPRRAQAPGAPLLPVLALLPLLLG) is a signal peptide. The Extracellular segment spans residues 26-640 (AGPQSGCLAS…LTNMPRHSLY (615 aa)). EGF-like domains are found at residues 44 to 92 (APGP…TYCQ) and 94 to 133 (VADP…LNCE). Residues 44 to 133 (APGPCASQPC…NDGYEGLNCE (90 aa)) are interaction with NOTCH1. Cystine bridges form between Cys48-Cys59, Cys53-Cys80, Cys82-Cys91, Cys98-Cys108, Cys103-Cys121, and Cys123-Cys132. An N-linked (GlcNAc...) asparagine glycan is attached at Asn204. EGF-like domains follow at residues 309–348 (PGDS…TFCE), 349–390 (EFDA…ELCQ), 392–428 (KIDY…SACE), 430–466 (KVDP…PTCA), and 468–503 (LVDF…LYCE). Cystine bridges form between Cys319–Cys336, Cys338–Cys347, Cys353–Cys364, Cys358–Cys378, Cys380–Cys389, Cys396–Cys407, Cys401–Cys416, Cys418–Cys427, Cys434–Cys445, Cys439–Cys454, Cys456–Cys465, Cys472–Cys482, Cys477–Cys491, Cys493–Cys502, Cys509–Cys520, Cys514–Cys529, Cys531–Cys540, Cys547–Cys558, Cys552–Cys567, Cys569–Cys578, Cys585–Cys596, Cys590–Cys605, and Cys607–Cys616. The EGF-like 8; calcium-binding domain occupies 505-541 (EYNECLSAPCLNAATCRDLINGYECVCLAEYKGTHCE). Residues 543–579 (YKDPCANISCLNGGTCDSEGLNGTCICAPGFTGEECD) enclose the EGF-like 9 domain. An N-linked (GlcNAc...) asparagine glycan is attached at Asn564. The EGF-like 10; calcium-binding domain occupies 581–617 (DINECDSNPCHHAGTCLDQPNGYTCHCPHGWVGANCE). A helical transmembrane segment spans residues 641–661 (IIIGALCVAFILMLIILIVGI). Topologically, residues 662–737 (CRISRIEYQG…LVTLIKTKDL (76 aa)) are cytoplasmic. The interaction with AP1G1 and somatodendritic targeting stretch occupies residues 677–680 (YEEF). Position 685 is a phosphoserine (Ser685). Phosphotyrosine is present on Tyr711. Position 714 is a phosphothreonine (Thr714). Tyr721 carries the post-translational modification Phosphotyrosine. Ser722 is modified (phosphoserine).

Interacts with AP1G1. Interacts with NOTCH1. In terms of processing, N-glycosylated. Specifically expressed in brain neurons (at protein level).

Its subcellular location is the cell membrane. Its function is as follows. Mediates neuron-glia interaction during astrocytogenesis. May promote differentiation of Bergmann glia during cerebellar development by activating DELTEX-dependent NOTCH1 signaling. This chain is Delta and Notch-like epidermal growth factor-related receptor (Dner), found in Mus musculus (Mouse).